A 151-amino-acid chain; its full sequence is Deoxyuridine 5'-triphosphate nucleotidohydrolase (151 aa).

Residues 70-72 (RSG), asparagine 83, 87-89 (LID), and methionine 97 contribute to the substrate site.

Belongs to the dUTPase family. Mg(2+) serves as cofactor.

The enzyme catalyses dUTP + H2O = dUMP + diphosphate + H(+). The protein operates within pyrimidine metabolism; dUMP biosynthesis; dUMP from dCTP (dUTP route): step 2/2. Its function is as follows. This enzyme is involved in nucleotide metabolism: it produces dUMP, the immediate precursor of thymidine nucleotides and it decreases the intracellular concentration of dUTP so that uracil cannot be incorporated into DNA. In Stutzerimonas stutzeri (strain A1501) (Pseudomonas stutzeri), this protein is Deoxyuridine 5'-triphosphate nucleotidohydrolase.